We begin with the raw amino-acid sequence, 389 residues long: Calreticulin (389 aa).

The N-terminal stretch at 1-13 (MFTLFLLIALSSA) is a signal peptide. The N-domain stretch occupies residues 12 to 189 (SAKVYFHETF…GVEKQEGKFD (178 aa)). 3 residues coordinate Ca(2+): threonine 20, asparagine 52, and asparagine 53. The cysteines at positions 96 and 130 are disulfide-linked. Residues tyrosine 100, lysine 102, tyrosine 121, and aspartate 128 each coordinate an alpha-D-glucoside. Tandem repeats lie at residues 183–194 (KQEGKFDEDWDM), 202–213 (DPNVSKPADWVD), 219–230 (DPNDKKPEGWDD), 237–248 (DPNAKKPEEWND), 252–262 (GEWEAPTIENP), 266–276 (GEWKPKRIPNP), and 280–290 (GEWVHPQIANP). The interval 183 to 248 (KQEGKFDEDW…NAKKPEEWND (66 aa)) is 4 X approximate repeats. Positions 190–301 (EDWDMLAPKE…YVYDPELYKY (112 aa)) are P-domain. The span at 213–232 (DEKEIDDPNDKKPEGWDDIP) shows a compositional bias: basic and acidic residues. A disordered region spans residues 213-256 (DEKEIDDPNDKKPEGWDDIPKTIVDPNAKKPEEWNDEDDGEWEA). Residues 252–290 (GEWEAPTIENPEYKGEWKPKRIPNPAYKGEWVHPQIANP) form a 3 X approximate repeats region. Residues 302–389 (DSFAYIGIDV…IKKEENKEEL (88 aa)) are C-domain. An alpha-D-glucoside is bound at residue aspartate 310. Aspartate 321 contributes to the Ca(2+) binding site. Positions 329–388 (IEEAEKEAKVILERNAAEKKMRDEIKEAEKQKEEEAKKEAEKQKEEETKEEIKKEENKEE) form a coiled coil. The disordered stretch occupies residues 347 to 389 (KKMRDEIKEAEKQKEEEAKKEAEKQKEEETKEEIKKEENKEEL). Residues 386-389 (KEEL) carry the Prevents secretion from ER motif.

This sequence belongs to the calreticulin family. Interacts (via C-terminus) with host C1q.

The protein localises to the endoplasmic reticulum lumen. Its subcellular location is the cell projection. The protein resides in the uropodium. It is found in the cell surface. It localises to the phagocytic cup. Molecular calcium-binding chaperone promoting folding, oligomeric assembly and quality control in the ER via the calreticulin/calnexin cycle. This lectin may interact transiently with almost all of the monoglucosylated glycoproteins that are synthesized in the ER. Plays a role in host cell phagocytosis, possibly by acting as a receptor for host C1q. Binding to C1q prevents the activation of the host classical complement pathway. Also, binds to apoptotic host cells independently of host C1q and collectins. In Entamoeba histolytica (strain ATCC 30459 / HM-1:IMSS / ABRM), this protein is Calreticulin.